A 1247-amino-acid polypeptide reads, in one-letter code: Leucine-rich repeat-containing protein 53 (1247 aa).

LRR repeat units follow at residues 34–55, 58–79, 82–102, 108–129, 132–153, 158–179, and 182–203; these read TTRV…NLSL, NLAL…ALHG, MLRT…TDHT, SLQV…WFRN, GLTR…SFGG, SLRY…AFRP, and QLQE…FTPL. The LRRCT domain maps to 214-271; that stretch reads NQWSCTCDLHPLARFLRNYIKSSAHTLRNAKDLNCQPSTAAVAAAQSVLRLSETNCDS. The chain crosses the membrane as a helical span at residues 294 to 314; that stretch reads LLTVLGFAGAVGLTCLGLVVF. Disordered stretches follow at residues 828–866, 887–927, and 1223–1247; these read SAGH…EDAT, VLPF…SPRN, and ENSA…LETE. Polar residues-rich tracts occupy residues 898–927 and 1238–1247; these read DQGT…SPRN and YATTSPLETE.

Its subcellular location is the membrane. This chain is Leucine-rich repeat-containing protein 53 (LRRC53), found in Homo sapiens (Human).